The following is a 426-amino-acid chain: Gamma-glutamyl phosphate reductase (426 aa).

Belongs to the gamma-glutamyl phosphate reductase family.

The protein resides in the cytoplasm. It carries out the reaction L-glutamate 5-semialdehyde + phosphate + NADP(+) = L-glutamyl 5-phosphate + NADPH + H(+). It functions in the pathway amino-acid biosynthesis; L-proline biosynthesis; L-glutamate 5-semialdehyde from L-glutamate: step 2/2. Functionally, catalyzes the NADPH-dependent reduction of L-glutamate 5-phosphate into L-glutamate 5-semialdehyde and phosphate. The product spontaneously undergoes cyclization to form 1-pyrroline-5-carboxylate. This Acidovorax ebreus (strain TPSY) (Diaphorobacter sp. (strain TPSY)) protein is Gamma-glutamyl phosphate reductase.